We begin with the raw amino-acid sequence, 75 residues long: UPF0235 protein Ava_3894 (75 aa).

The segment at 1 to 32 is disordered; sequence MQKKVKVKPNSKQQKIAEQDDGSLTVHLKSPP.

Belongs to the UPF0235 family.

This Trichormus variabilis (strain ATCC 29413 / PCC 7937) (Anabaena variabilis) protein is UPF0235 protein Ava_3894.